The primary structure comprises 410 residues: Sprouty-related, EVH1 domain-containing protein 2 (410 aa).

Positions 5–122 (THPDDDSYIV…RGVRKAIEDL (118 aa)) constitute a WH1 domain. Residues 127 to 171 (TTSSSTIHNEAELGDDDVFTTATDSSSNSSQKREPNTRTISSPTS) form a disordered region. The span at 146 to 156 (TTATDSSSNSS) shows a compositional bias: polar residues. In terms of domain architecture, KBD spans 197–252 (SYPQVTFPEDDEEIVRINPREKIWMTGYEDYRHAPVRGKYLDSTEDADSYVRFAKG). Phosphotyrosine occurs at positions 224 and 227. The interval 274 to 294 (DPKGNVIKTQPPRAKSRRRKE) is disordered. One can recognise an SPR domain in the interval 300–408 (RCVYCRDMFN…CRCCGGKHKA (109 aa)).

Homodimer and heterodimer. Able to interact with SPRED1 to form heterodimers. Interacts with RAS. May interact with ZDHHC13 (via ANK repeats) and ZDHHC17 (via ANK repeats). Interacts with TESK1. Interacts with NF1. In terms of processing, phosphorylated on serine and threonine residues. Phosphorylated on tyrosine. Phosphorylation of Tyr-224 and Tyr-227 are required for ubiquitination. Post-translationally, ubiquitinated; leading to degradation by the proteasome. Expressed in the eye, with higher expression in lens epithelium than in lens fiber cells at postnatal day 15.

Its subcellular location is the cell membrane. It localises to the cytoplasmic vesicle. It is found in the secretory vesicle membrane. The protein resides in the cytoplasm. Functionally, negatively regulates Ras signaling pathways and downstream activation of MAP kinases. Recruits and translocates NF1 to the cell membrane, thereby enabling NF1-dependent hydrolysis of active GTP-bound Ras to inactive GDP-bound Ras. Inhibits fibroblast growth factor (FGF)-induced retinal lens fiber differentiation, probably by inhibiting FGF-mediated phosphorylation of ERK1/2. Inhibits TGFB-induced epithelial-to-mesenchymal transition in lens epithelial cells. The chain is Sprouty-related, EVH1 domain-containing protein 2 (Spred2) from Rattus norvegicus (Rat).